A 197-amino-acid polypeptide reads, in one-letter code: Viral polyamine acetyltransferase (197 aa).

N22 contributes to the acetyl-CoA binding site. E27 is a catalytic residue. An N-acetyltransferase domain is found at 102–182; it reads SYTPDDKCLY…YQYGITKPFD (81 aa). The acetyl-CoA site is built by I115, S117, G121, G123, A125, T126, T149, N150, and K159.

Belongs to the acetyltransferase family.

It catalyses the reaction spermine + acetyl-CoA = N(1)-acetylspermine + CoA + H(+). It carries out the reaction spermidine + acetyl-CoA = N(1)-acetylspermidine + CoA + H(+). The catalysed reaction is spermidine + acetyl-CoA = N(8)-acetylspermidine + CoA + H(+). The enzyme catalyses putrescine + acetyl-CoA = N-acetylputrescine + CoA + H(+). It catalyses the reaction cadaverine + acetyl-CoA = N-acetylcadaverine + CoA + H(+). It carries out the reaction sym-homospermidine + acetyl-CoA = N(1)-acetyl-sym-homospermidine + CoA + H(+). Its function is as follows. Acetylates polyamines such as spermine, spermidine, cadaverine, homospermidine and putrescine (the latter with low efficiency). May play a role in the regulation of polyamine catabolism in the host during viral replication. This is Viral polyamine acetyltransferase from Chlorella (PBCV-1).